A 549-amino-acid chain; its full sequence is Chaperonin GroEL (549 aa).

Residues 30-33 (TLGP), K51, 87-91 (DGTTT), G415, and D495 contribute to the ATP site.

This sequence belongs to the chaperonin (HSP60) family. Forms a cylinder of 14 subunits composed of two heptameric rings stacked back-to-back. Interacts with the co-chaperonin GroES.

It is found in the cytoplasm. The catalysed reaction is ATP + H2O + a folded polypeptide = ADP + phosphate + an unfolded polypeptide.. In terms of biological role, together with its co-chaperonin GroES, plays an essential role in assisting protein folding. The GroEL-GroES system forms a nano-cage that allows encapsulation of the non-native substrate proteins and provides a physical environment optimized to promote and accelerate protein folding. The protein is Chaperonin GroEL of Colwellia maris.